We begin with the raw amino-acid sequence, 180 residues long: Small ribosomal subunit protein uS4 (180 aa).

The S4 RNA-binding domain maps to 104–166 (RRLQTIVHRK…PTSPFKNNPP (63 aa)). Residues 155 to 180 (FYPTSPFKNNPPTAGQGEVNVEQKGN) are disordered.

This sequence belongs to the universal ribosomal protein uS4 family. In terms of assembly, part of the 30S ribosomal subunit. Contacts protein S5. The interaction surface between S4 and S5 is involved in control of translational fidelity.

Its function is as follows. One of the primary rRNA binding proteins, it binds directly to 16S rRNA where it nucleates assembly of the body of the 30S subunit. Functionally, with S5 and S12 plays an important role in translational accuracy. The chain is Small ribosomal subunit protein uS4 from Metallosphaera sedula (strain ATCC 51363 / DSM 5348 / JCM 9185 / NBRC 15509 / TH2).